Consider the following 617-residue polypeptide: Probable LRR receptor-like serine/threonine-protein kinase RKF3 (617 aa).

The first 20 residues, 1–20 (MLFLRRIAVVFFVFTSFSAA), serve as a signal peptide directing secretion. Topologically, residues 21 to 212 (QNSTCPLDFS…PTSSGANKVK (192 aa)) are extracellular. 4 N-linked (GlcNAc...) asparagine glycosylation sites follow: asparagine 22, asparagine 124, asparagine 135, and asparagine 165. Residues 213–233 (VLVSSFSVLLVASVLVITAWF) traverse the membrane as a helical segment. The Cytoplasmic portion of the chain corresponds to 234–617 (WYCRRKKSKL…DGPSGNTNTT (384 aa)). Residues 283 to 563 (FSRHNIIGRG…VKMLESNEFT (281 aa)) form the Protein kinase domain. Residues 289-297 (IGRGGYGNV) and lysine 311 contribute to the ATP site. Catalysis depends on aspartate 412, which acts as the Proton acceptor. Residues 585 to 617 (VSSSSGSGKLTSPTGYQAFSFGGDGPSGNTNTT) form a disordered region.

It belongs to the protein kinase superfamily. Ser/Thr protein kinase family. Expressed in the whole plant at low levels.

Its subcellular location is the cell membrane. The catalysed reaction is L-seryl-[protein] + ATP = O-phospho-L-seryl-[protein] + ADP + H(+). It carries out the reaction L-threonyl-[protein] + ATP = O-phospho-L-threonyl-[protein] + ADP + H(+). In Arabidopsis thaliana (Mouse-ear cress), this protein is Probable LRR receptor-like serine/threonine-protein kinase RKF3 (RKF3).